Consider the following 134-residue polypeptide: D-ribose pyranase (134 aa).

The active-site Proton donor is the H20. Residues D28, H101, and 123-125 each bind substrate; that span reads YCN.

It belongs to the RbsD / FucU family. RbsD subfamily. In terms of assembly, homodecamer.

It localises to the cytoplasm. It carries out the reaction beta-D-ribopyranose = beta-D-ribofuranose. The protein operates within carbohydrate metabolism; D-ribose degradation; D-ribose 5-phosphate from beta-D-ribopyranose: step 1/2. Catalyzes the interconversion of beta-pyran and beta-furan forms of D-ribose. In Pseudomonas fluorescens (strain Pf0-1), this protein is D-ribose pyranase.